Reading from the N-terminus, the 602-residue chain is UvrABC system protein C (602 aa).

The region spanning 15-100 is the GIY-YIG domain; sequence DQSGVYHYFD…IKQLKPKYNI (86 aa). In terms of domain architecture, UVR spans 206-241; the sequence is SKLISRLKERMEKLAENLRFEEAGELRDRIEKIKRI.

The protein belongs to the UvrC family. Interacts with UvrB in an incision complex.

Its subcellular location is the cytoplasm. Its function is as follows. The UvrABC repair system catalyzes the recognition and processing of DNA lesions. UvrC both incises the 5' and 3' sides of the lesion. The N-terminal half is responsible for the 3' incision and the C-terminal half is responsible for the 5' incision. The sequence is that of UvrABC system protein C from Wolinella succinogenes (strain ATCC 29543 / DSM 1740 / CCUG 13145 / JCM 31913 / LMG 7466 / NCTC 11488 / FDC 602W) (Vibrio succinogenes).